The sequence spans 81 residues: Small ribosomal subunit protein bS20 (81 aa).

It belongs to the bacterial ribosomal protein bS20 family.

In terms of biological role, binds directly to 16S ribosomal RNA. In Mycoplasma mycoides subsp. mycoides SC (strain CCUG 32753 / NCTC 10114 / PG1), this protein is Small ribosomal subunit protein bS20.